The following is a 274-amino-acid chain: Putative outer membrane protein CPn_1073/CP_0776/CPj1073/CpB1118 (274 aa).

A signal peptide spans 1 to 21 (MRRYLFMVLALCLYRAAPLEA).

The protein localises to the cell outer membrane. The sequence is that of Putative outer membrane protein CPn_1073/CP_0776/CPj1073/CpB1118 from Chlamydia pneumoniae (Chlamydophila pneumoniae).